Reading from the N-terminus, the 463-residue chain is NADH-quinone oxidoreductase subunit N (463 aa).

The next 14 helical transmembrane spans lie at 2–22 (NTLI…ILNF), 25–45 (GIVP…FYEF), 61–81 (FSTA…ALSH), 91–110 (ISDF…AMVS), 114–133 (LAMF…VLAA), 149–169 (FLMG…IYGA), 189–209 (IWFP…IAAV), 223–243 (PALT…ATLF), 264–284 (FTNV…IMAL), 292–312 (MLAF…LTIA), 317–337 (VLLY…SVIL), 362–382 (AAIL…SGFF), 395–415 (GYVA…GYYF), and 434–454 (PFLI…LGLF).

It belongs to the complex I subunit 2 family. As to quaternary structure, NDH-1 is composed of 14 different subunits. Subunits NuoA, H, J, K, L, M, N constitute the membrane sector of the complex.

The protein localises to the cell inner membrane. It carries out the reaction a quinone + NADH + 5 H(+)(in) = a quinol + NAD(+) + 4 H(+)(out). In terms of biological role, NDH-1 shuttles electrons from NADH, via FMN and iron-sulfur (Fe-S) centers, to quinones in the respiratory chain. The immediate electron acceptor for the enzyme in this species is believed to be a menaquinone. Couples the redox reaction to proton translocation (for every two electrons transferred, four hydrogen ions are translocated across the cytoplasmic membrane), and thus conserves the redox energy in a proton gradient. The protein is NADH-quinone oxidoreductase subunit N of Flavobacterium johnsoniae (strain ATCC 17061 / DSM 2064 / JCM 8514 / BCRC 14874 / CCUG 350202 / NBRC 14942 / NCIMB 11054 / UW101) (Cytophaga johnsonae).